Reading from the N-terminus, the 492-residue chain is MANYFNTLNLRQQLAQLGKCRFMARDEFADEAGYLKGKKVVIVGCGAQGLNQGLNMRDSGLDVAYALRKEAIAEKRASWRKATENGFKVGTYEELIPQADLVVNLTPDKQHSAVVKAVQPLMKEGAALGYSHGFNIVEVGEQVRKDITVVMVAPKCPGTEVREEYKRGFGVPTLIAVHPENDPKGEGMAIAKAWAAATGGHRAGVLEFSFVAEVKSDLMGEQTILCGMLQAGSLLCFDKLVSEGTDAAYAEKLIQFGWETITEALKQGGITLMMDRLSNPAKLRAYALSEQLKEIMAPLFQKHMDDIISGAFSSGMMADWANDDVKLLNWREETGRTAFENAPQFEGKISEQEYFDHGVLMIAMVKAGVELAFETMVDSGIIEESAYYESLHELPLIANTIARKRLYEMNVVISDTAEYGNYLFANAAVPLLKEKFMDSLQAGDLGKSIPGSAVDNAQLRDVNEAIRNHPIEAVGHKLRGYMTDMKRIAVAG.

Residues 15–208 (AQLGKCRFMA…GGHRAGVLEF (194 aa)) form the KARI N-terminal Rossmann domain. NADP(+)-binding positions include 45-48 (CGAQ), R68, R76, S78, and 108-110 (DKQ). The active site involves H132. Position 158 (G158) interacts with NADP(+). 2 consecutive KARI C-terminal knotted domains span residues 209–344 (SFVA…NAPQ) and 345–485 (FEGK…MTDM). The Mg(2+) site is built by D217, E221, E389, and E393. A substrate-binding site is contributed by S414.

It belongs to the ketol-acid reductoisomerase family. The cofactor is Mg(2+).

The catalysed reaction is (2R)-2,3-dihydroxy-3-methylbutanoate + NADP(+) = (2S)-2-acetolactate + NADPH + H(+). It carries out the reaction (2R,3R)-2,3-dihydroxy-3-methylpentanoate + NADP(+) = (S)-2-ethyl-2-hydroxy-3-oxobutanoate + NADPH + H(+). It participates in amino-acid biosynthesis; L-isoleucine biosynthesis; L-isoleucine from 2-oxobutanoate: step 2/4. Its pathway is amino-acid biosynthesis; L-valine biosynthesis; L-valine from pyruvate: step 2/4. Involved in the biosynthesis of branched-chain amino acids (BCAA). Catalyzes an alkyl-migration followed by a ketol-acid reduction of (S)-2-acetolactate (S2AL) to yield (R)-2,3-dihydroxy-isovalerate. In the isomerase reaction, S2AL is rearranged via a Mg-dependent methyl migration to produce 3-hydroxy-3-methyl-2-ketobutyrate (HMKB). In the reductase reaction, this 2-ketoacid undergoes a metal-dependent reduction by NADPH to yield (R)-2,3-dihydroxy-isovalerate. The sequence is that of Ketol-acid reductoisomerase (NADP(+)) from Yersinia pestis bv. Antiqua (strain Antiqua).